Here is a 147-residue protein sequence, read N- to C-terminus: uncharacterized protein (147 aa).

Residues 1 to 16 (MDHRAAFGYFSNACFK) are Extracellular-facing. A helical membrane pass occupies residues 17–37 (VMLFSSLLASFASSVAFISLI). At 38–105 (TFSLSSSESP…FEAAFFLLTN (68 aa)) the chain is on the cytoplasmic side. The helical transmembrane segment at 106–126 (EMIFFILYYFFSCLMFFYVAS) threads the bilayer. Over 127-147 (ERNTNPKILQTINTKPLYIKN) the chain is Extracellular.

It localises to the membrane. This is an uncharacterized protein from Saccharomyces cerevisiae (strain ATCC 204508 / S288c) (Baker's yeast).